The sequence spans 289 residues: Protein FraH (289 aa).

Residues 4–49 (CPNCNHPNPDGAVQCEACYTPLPATSNCPNCGATVQSDAAFCGQCG) form a DZANK-type zinc finger. A zinc finger spans residues 18–48 (CEACYTPLPATSNCPNCGATVQSDAAFCGQC). The FHA domain occupies 204–260 (VHIGKPNDRIPPDVDVSGFANSEIVSRVHADIRLEGDAHYIEDVGSSNGTYINNLPL).

Its function is as follows. Putative heterocyst to vegetative cell connection. The sequence is that of Protein FraH (fraH) from Nostoc sp. (strain PCC 7120 / SAG 25.82 / UTEX 2576).